We begin with the raw amino-acid sequence, 398 residues long: Elongation factor Tu (398 aa).

One can recognise a tr-type G domain in the interval 10–207 (KPHVNIGTIG…TVDEYIPEPE (198 aa)). The G1 stretch occupies residues 19-26 (GHVDHGKT). 19-26 (GHVDHGKT) lines the GTP pocket. T26 is a Mg(2+) binding site. The G2 stretch occupies residues 63 to 67 (GITIN). Residues 84–87 (DAPG) are G3. GTP-binding positions include 84 to 88 (DAPGH) and 139 to 142 (NKVD). The G4 stretch occupies residues 139 to 142 (NKVD). A G5 region spans residues 177-179 (SAL).

Belongs to the TRAFAC class translation factor GTPase superfamily. Classic translation factor GTPase family. EF-Tu/EF-1A subfamily. Monomer.

It is found in the cytoplasm. The catalysed reaction is GTP + H2O = GDP + phosphate + H(+). In terms of biological role, GTP hydrolase that promotes the GTP-dependent binding of aminoacyl-tRNA to the A-site of ribosomes during protein biosynthesis. The chain is Elongation factor Tu from Streptococcus agalactiae serotype Ia (strain ATCC 27591 / A909 / CDC SS700).